The sequence spans 890 residues: Alanine--tRNA ligase (890 aa).

Residues His573, His577, Cys676, and His680 each coordinate Zn(2+).

Belongs to the class-II aminoacyl-tRNA synthetase family. Zn(2+) is required as a cofactor.

The protein resides in the cytoplasm. It catalyses the reaction tRNA(Ala) + L-alanine + ATP = L-alanyl-tRNA(Ala) + AMP + diphosphate. Catalyzes the attachment of alanine to tRNA(Ala) in a two-step reaction: alanine is first activated by ATP to form Ala-AMP and then transferred to the acceptor end of tRNA(Ala). Also edits incorrectly charged Ser-tRNA(Ala) and Gly-tRNA(Ala) via its editing domain. The chain is Alanine--tRNA ligase from Corynebacterium efficiens (strain DSM 44549 / YS-314 / AJ 12310 / JCM 11189 / NBRC 100395).